Reading from the N-terminus, the 296-residue chain is Probable xyloglucan endotransglucosylase/hydrolase 1 (296 aa).

A signal peptide spans 1–22 (MGIIKGVLFSIVLINLSLVVFC). Residues 23 to 221 (GYPRRPVDVP…WANAPFTASY (199 aa)) form the GH16 domain. E107 functions as the Nucleophile in the catalytic mechanism. Residue E111 is the Proton donor of the active site. E111 provides a ligand contact to xyloglucan. N-linked (GlcNAc...) asparagine glycosylation occurs at N115. Xyloglucan-binding positions include 124 to 126 (QTN), 134 to 136 (NRE), 200 to 201 (DW), and G205. Disulfide bonds link C229–C240 and C277–C290. R282 is a binding site for xyloglucan.

The protein belongs to the glycosyl hydrolase 16 family. XTH group 1 subfamily. Post-translationally, contains at least one intrachain disulfide bond essential for its enzymatic activity.

It is found in the secreted. It localises to the cell wall. The protein localises to the extracellular space. The protein resides in the apoplast. The catalysed reaction is breaks a beta-(1-&gt;4) bond in the backbone of a xyloglucan and transfers the xyloglucanyl segment on to O-4 of the non-reducing terminal glucose residue of an acceptor, which can be a xyloglucan or an oligosaccharide of xyloglucan.. Functionally, catalyzes xyloglucan endohydrolysis (XEH) and/or endotransglycosylation (XET). Cleaves and religates xyloglucan polymers, an essential constituent of the primary cell wall, and thereby participates in cell wall construction of growing tissues. This is Probable xyloglucan endotransglucosylase/hydrolase 1 (XTH1) from Solanum lycopersicum (Tomato).